Here is a 411-residue protein sequence, read N- to C-terminus: Glutamate dehydrogenase 1 (411 aa).

The active site involves Lys102.

The protein belongs to the Glu/Leu/Phe/Val dehydrogenases family.

The enzyme catalyses L-glutamate + NAD(+) + H2O = 2-oxoglutarate + NH4(+) + NADH + H(+). It catalyses the reaction L-glutamate + NADP(+) + H2O = 2-oxoglutarate + NH4(+) + NADPH + H(+). In Arabidopsis thaliana (Mouse-ear cress), this protein is Glutamate dehydrogenase 1 (GDH1).